We begin with the raw amino-acid sequence, 463 residues long: uncharacterized protein (463 aa).

12 helical membrane passes run 17–37 (ISLMSLGAAIGVGLFLGSASA), 40–60 (LAGPGILVAYAASGLVMFFIM), 97–117 (WFLWVVTCMAEITAVGIYMGF), 122–142 (VPNWIWALSALVIMTGVNFLA), 153–173 (FALIKIVAILSMIAVGLLMII), 201–221 (GVLLSLQMVMFAYLGIEMIGV), 244–264 (ILIFYVGALFVIMSIYPWQEI), 278–298 (VGIPSAAGIINFVVLTAALSS), 335–355 (AVLASAGALLVGVLLNYVVPA), 357–377 (VFTWVTSIATFGAIWTWAIIL), 401–421 (LFPFTSYVSLAFLAFVVILMA), and 429–449 (AVIIGPIWFLILLAVYYGKGF).

The protein belongs to the amino acid-polyamine-organocation (APC) superfamily.

It localises to the cell membrane. This is an uncharacterized protein from Bacillus subtilis (strain 168).